A 376-amino-acid chain; its full sequence is N-acetyldiaminopimelate deacetylase (376 aa).

The active site involves D69. Catalysis depends on E128, which acts as the Proton acceptor.

The protein belongs to the peptidase M20A family. N-acetyldiaminopimelate deacetylase subfamily.

It carries out the reaction N-acetyl-(2S,6S)-2,6-diaminopimelate + H2O = (2S,6S)-2,6-diaminopimelate + acetate. It participates in amino-acid biosynthesis; L-lysine biosynthesis via DAP pathway; LL-2,6-diaminopimelate from (S)-tetrahydrodipicolinate (acetylase route): step 3/3. In terms of biological role, catalyzes the conversion of N-acetyl-diaminopimelate to diaminopimelate and acetate. The chain is N-acetyldiaminopimelate deacetylase from Bacillus cereus (strain B4264).